Here is a 386-residue protein sequence, read N- to C-terminus: S-adenosylmethionine synthase (386 aa).

Histidine 14 is an ATP binding site. A Mg(2+)-binding site is contributed by aspartate 16. Glutamate 42 contributes to the K(+) binding site. The L-methionine site is built by glutamate 55 and glutamine 101. Residues 101–111 (QSADIALGVDE) form a flexible loop region. Residues 166–168 (DGK), 233–234 (RF), aspartate 242, 248–249 (RK), alanine 265, and lysine 269 each bind ATP. Aspartate 242 serves as a coordination point for L-methionine. Lysine 273 serves as a coordination point for L-methionine.

Belongs to the AdoMet synthase family. As to quaternary structure, homotetramer; dimer of dimers. Requires Mg(2+) as cofactor. K(+) serves as cofactor.

It is found in the cytoplasm. The enzyme catalyses L-methionine + ATP + H2O = S-adenosyl-L-methionine + phosphate + diphosphate. It participates in amino-acid biosynthesis; S-adenosyl-L-methionine biosynthesis; S-adenosyl-L-methionine from L-methionine: step 1/1. Catalyzes the formation of S-adenosylmethionine (AdoMet) from methionine and ATP. The overall synthetic reaction is composed of two sequential steps, AdoMet formation and the subsequent tripolyphosphate hydrolysis which occurs prior to release of AdoMet from the enzyme. This Acholeplasma laidlawii (strain PG-8A) protein is S-adenosylmethionine synthase.